Here is a 214-residue protein sequence, read N- to C-terminus: Ribosomal RNA large subunit methyltransferase E (214 aa).

S-adenosyl-L-methionine-binding residues include glycine 60, tryptophan 62, aspartate 86, aspartate 102, and aspartate 127. The active-site Proton acceptor is lysine 167.

This sequence belongs to the class I-like SAM-binding methyltransferase superfamily. RNA methyltransferase RlmE family.

It localises to the cytoplasm. It carries out the reaction uridine(2552) in 23S rRNA + S-adenosyl-L-methionine = 2'-O-methyluridine(2552) in 23S rRNA + S-adenosyl-L-homocysteine + H(+). Specifically methylates the uridine in position 2552 of 23S rRNA at the 2'-O position of the ribose in the fully assembled 50S ribosomal subunit. This is Ribosomal RNA large subunit methyltransferase E from Herminiimonas arsenicoxydans.